The sequence spans 633 residues: Opioid growth factor receptor (633 aa).

Methionine 1 carries the post-translational modification N-acetylmethionine. The span at 1-38 shows a compositional bias: acidic residues; it reads MDDPECDSTWEDESEEDGEDGQADDTTDEDTGDDDGDA. The segment at 1–44 is disordered; sequence MDDPECDSTWEDESEEDGEDGQADDTTDEDTGDDDGDAEEARPS. Residues 257–286 carry the Bipartite nuclear localization signal motif; the sequence is RRELVHFAWEHFKPRREFVWGPRDKLRRFR. The disordered stretch occupies residues 287 to 390; that stretch reads PQTISRPLMG…EPDPQGVSEV (104 aa). Residues serine 327, serine 340, serine 361, serine 365, serine 403, and serine 452 each carry the phosphoserine modification. Basic and acidic residues predominate over residues 351–374; that stretch reads GDQRHEAKSPSPKESKKRKLEGNR. Residues 404 to 633 form a disordered region; sequence PTSQEPREAE…IEASVEPPKP (230 aa). Positions 441–455 are enriched in polar residues; it reads ASNTQVQASALSPTP. 14 consecutive repeat copies span residues 467-475, 476-484, 485-493, 494-502, 503-511, 512-520, 521-529, 530-538, 539-547, 548-556, 557-565, 566-574, 575-583, and 584-592. The tract at residues 467 to 592 is 14 X approximate tandem repeats; the sequence is GPEDPKSQVG…VGPEDPQSQV (126 aa). Residues 505-517 are compositionally biased toward basic and acidic residues; it reads EDPKGQVEPEDPK. Basic and acidic residues predominate over residues 550-580; the sequence is EDPKSQVEPEDPKSQVEPEDPKSQVEPEDPK. Phosphoserine is present on residues serine 601 and serine 608.

Belongs to the opioid growth factor receptor family. In terms of tissue distribution, expressed in all tissues examined, including brain, heart, lung, liver, kidney and skeletal muscle.

The protein localises to the cytoplasm. It localises to the nucleus. Its function is as follows. Receptor for opioid growth factor (OGF), also known as Met-enkephalin. Seems to be involved in growth regulation. The polypeptide is Opioid growth factor receptor (Ogfr) (Mus musculus (Mouse)).